The primary structure comprises 152 residues: Large ribosomal subunit protein uL15 (152 aa).

The interval 1–56 (MTSTLNTLKSNLGSRKKKLRKGRGIAAGQGASCGFGMRGQKSRSGRPTRPGFEGGQ) is disordered. Residues 14-23 (SRKKKLRKGR) show a composition bias toward basic residues. The segment covering 25 to 37 (IAAGQGASCGFGM) has biased composition (gly residues).

It belongs to the universal ribosomal protein uL15 family. Part of the 50S ribosomal subunit.

Functionally, binds to the 23S rRNA. This is Large ribosomal subunit protein uL15 from Prochlorococcus marinus (strain MIT 9515).